Consider the following 610-residue polypeptide: Protein Smaug homolog 1 (610 aa).

Position 67 is a phosphoserine (S67). Disordered stretches follow at residues A177 to S222, S318 to P366, and N464 to N487. The region spanning S222–E295 is the SAM domain. S319 carries the post-translational modification Phosphoserine. Residue T323 is modified to Phosphothreonine. Residues S344 to G358 show a composition bias toward low complexity. R465 carries the omega-N-methylarginine modification. Polar residues predominate over residues F467–G480. S472 bears the Phosphoserine mark.

Belongs to the SMAUG family. Expressed in brain (at protein level).

The protein localises to the cytoplasm. Its subcellular location is the cell projection. The protein resides in the dendrite. It localises to the synapse. It is found in the synaptosome. Functionally, acts as a translational repressor of SRE-containing messengers. This Rattus norvegicus (Rat) protein is Protein Smaug homolog 1 (Samd4a).